The sequence spans 507 residues: ESX-5 secretion system ATPase EccB5 (507 aa).

A helical membrane pass occupies residues 56–76; that stretch reads VVASVSAALVICLGSLLWSFI.

The protein belongs to the EccB family. In terms of assembly, part of the ESX-5 / type VII secretion system (T7SS), which is composed of cytosolic and membrane components. The ESX-5 membrane complex is composed of EccB5, EccC5, EccD5 and EccE5.

It localises to the cell inner membrane. Functionally, an ATPase. Part of the ESX-5 specialized secretion system, which is responsible for the secretion of EsxN and a number of PE_PGRS and PPE proteins. The protein is ESX-5 secretion system ATPase EccB5 of Mycobacterium marinum (strain ATCC BAA-535 / M).